Reading from the N-terminus, the 126-residue chain is Holo-[acyl-carrier-protein] synthase (126 aa).

D9 and E58 together coordinate Mg(2+).

Belongs to the P-Pant transferase superfamily. AcpS family. Mg(2+) is required as a cofactor.

It is found in the cytoplasm. The catalysed reaction is apo-[ACP] + CoA = holo-[ACP] + adenosine 3',5'-bisphosphate + H(+). Its function is as follows. Transfers the 4'-phosphopantetheine moiety from coenzyme A to a Ser of acyl-carrier-protein. The sequence is that of Holo-[acyl-carrier-protein] synthase from Buchnera aphidicola subsp. Cinara cedri (strain Cc).